The following is a 1058-amino-acid chain: Isoleucine--tRNA ligase (1058 aa).

Residues 48–58 (PYTTGHIHLGT) carry the 'HIGH' region motif. Positions 596 to 600 (KMSKS) match the 'KMSKS' region motif. ATP is bound at residue lysine 599.

This sequence belongs to the class-I aminoacyl-tRNA synthetase family. IleS type 2 subfamily. As to quaternary structure, monomer. Requires Zn(2+) as cofactor.

The protein localises to the cytoplasm. The catalysed reaction is tRNA(Ile) + L-isoleucine + ATP = L-isoleucyl-tRNA(Ile) + AMP + diphosphate. Catalyzes the attachment of isoleucine to tRNA(Ile). As IleRS can inadvertently accommodate and process structurally similar amino acids such as valine, to avoid such errors it has two additional distinct tRNA(Ile)-dependent editing activities. One activity is designated as 'pretransfer' editing and involves the hydrolysis of activated Val-AMP. The other activity is designated 'posttransfer' editing and involves deacylation of mischarged Val-tRNA(Ile). The protein is Isoleucine--tRNA ligase of Methanosarcina barkeri (strain Fusaro / DSM 804).